We begin with the raw amino-acid sequence, 483 residues long: Cysteine--tRNA ligase (483 aa).

C29 serves as a coordination point for Zn(2+). The short motif at 31 to 41 (ITVYDYCHLGH) is the 'HIGH' region element. Residues C215, H240, and E244 each contribute to the Zn(2+) site. The 'KMSKS' region motif lies at 272-276 (KMSKS). Residue K275 coordinates ATP.

Belongs to the class-I aminoacyl-tRNA synthetase family. Monomer. The cofactor is Zn(2+).

It is found in the cytoplasm. The enzyme catalyses tRNA(Cys) + L-cysteine + ATP = L-cysteinyl-tRNA(Cys) + AMP + diphosphate. This is Cysteine--tRNA ligase (cysS) from Synechocystis sp. (strain ATCC 27184 / PCC 6803 / Kazusa).